A 572-amino-acid polypeptide reads, in one-letter code: Asparagine synthetase [glutamine-hydrolyzing] 1 (572 aa).

Catalysis depends on Cys2, which acts as the For GATase activity. Positions 2–186 (CGIFAAFRHE…PGHVYDSKTD (185 aa)) constitute a Glutamine amidotransferase type-2 domain. Residues 49-53 (RLAIV), 74-76 (NGE), and Asp97 contribute to the L-glutamine site. Residues 194–546 (PDWLDEKRIP…QKTVADTVMR (353 aa)) form the Asparagine synthetase domain. An ATP-binding site is contributed by Leu233. Ser265 carries the post-translational modification Phosphoserine. ATP contacts are provided by residues Ile292 and 366–367 (SG). Position 509 is a phosphoserine (Ser509).

The enzyme catalyses L-aspartate + L-glutamine + ATP + H2O = L-asparagine + L-glutamate + AMP + diphosphate + H(+). It functions in the pathway amino-acid biosynthesis; L-asparagine biosynthesis; L-asparagine from L-aspartate (L-Gln route): step 1/1. This Saccharomyces cerevisiae (strain ATCC 204508 / S288c) (Baker's yeast) protein is Asparagine synthetase [glutamine-hydrolyzing] 1 (ASN1).